Consider the following 336-residue polypeptide: uncharacterized protein (336 aa).

The disordered stretch occupies residues 196-222 (YKEGDDSNWDDFGSESEDDSKEAHSEE). Residues 201-215 (DSNWDDFGSESEDDS) show a composition bias toward acidic residues. Ser211 bears the Phosphoserine mark.

This is an uncharacterized protein from Schizosaccharomyces pombe (strain 972 / ATCC 24843) (Fission yeast).